Consider the following 88-residue polypeptide: Small ribosomal subunit protein uS17 (88 aa).

This sequence belongs to the universal ribosomal protein uS17 family. As to quaternary structure, part of the 30S ribosomal subunit.

Functionally, one of the primary rRNA binding proteins, it binds specifically to the 5'-end of 16S ribosomal RNA. The polypeptide is Small ribosomal subunit protein uS17 (Oleidesulfovibrio alaskensis (strain ATCC BAA-1058 / DSM 17464 / G20) (Desulfovibrio alaskensis)).